The sequence spans 904 residues: MVSFGGIARKLFGSSNDRRVRSFQPNVTAINSIEEKTKALTDEQLAAKTAEFRALLAEGKTLDDILIPAFAVVREASRRVLDLRPFDVQLIGGMILHSNAIAEMKTGEGKTLVATLPVYLNALSGKGVHVVTVNDYLAQRDAATMGRVYGFLGMTTGVIVHGLSDEERRAAYACDITYATNNELGFDYLRDNMKYEKNQMVQRGHNFAIVDEVDSILVDEARTPLIISGPLDDRSELYNTIDAFIPLLVPSDYEIDEKQRSANFSEEGTEKLENMLRQAGLLKGNALYDIENVAIVHHINNALKAHKLFQRDKDYIVRNGEVVIIDEFTGRMMPGRRYSEGQHQALEAKEKVQIQPENQTLASITFQNYFRMYDKLAGMTGTAQTEAEEFGNIYNLDVIEVPTNLPIKRIDEDDEVYRTFDEKFKAIIEEILDAHKRGQPVLVGTTSIEKSELLAERLRKQGFNDFQVLNARYHEQEAYIVAQAGVPGAVTIATNMAGRGTDIQLGGNLEMRIERELGEIEAGPEREARIQAIVEEIKELKQKALTAGGLYVIATERHESRRIDNQLRGRSGRQGDPGRSKFYLSLQDDLMRIFGSDRMDSMLTKLGLKEGEAIVHPWINKALERAQKKVEARNFDIRKNLLKYDDVLNDQRKVIFEQRLELMESTNISETVSDMRREVIEDLVEKHIPERAYAEQWDAVGLKTGVTNILNLDLPIEDWFKEEGIGEDDIRERLTEAANAAFTEKAERFGDDIMHYVERSIVMQTLDHLWREHIVNLDHLRSVIGFRGYAQRDPLQEYKSEAFELFTGLLNNLREAVTAQLMRVELVQQAPAEPEPPLMQAHHLDPMTGEDDFAPIYQASEVIVAPENRNPEDPTTWGKIGRNEACPCGSGKKYKHCHGAFEQV.

Residues glutamine 89, 107-111, and aspartate 502 contribute to the ATP site; that span reads GEGKT. The Zn(2+) site is built by cysteine 886, cysteine 888, cysteine 897, and histidine 898.

Belongs to the SecA family. As to quaternary structure, monomer and homodimer. Part of the essential Sec protein translocation apparatus which comprises SecA, SecYEG and auxiliary proteins SecDF-YajC and YidC. It depends on Zn(2+) as a cofactor.

The protein localises to the cell inner membrane. It localises to the cytoplasm. It catalyses the reaction ATP + H2O + cellular proteinSide 1 = ADP + phosphate + cellular proteinSide 2.. Functionally, part of the Sec protein translocase complex. Interacts with the SecYEG preprotein conducting channel. Has a central role in coupling the hydrolysis of ATP to the transfer of proteins into and across the cell membrane, serving both as a receptor for the preprotein-SecB complex and as an ATP-driven molecular motor driving the stepwise translocation of polypeptide chains across the membrane. The polypeptide is Protein translocase subunit SecA (Rhizobium etli (strain CIAT 652)).